The sequence spans 342 residues: Palmitoyltransferase PFA4 (342 aa).

Topologically, residues 1-8 (MITFSNPW) are cytoplasmic. A helical membrane pass occupies residues 9-29 (IGVIIPCIIIFTLSTFSAIYI). Over 30–38 (LPHHVSNNE) the chain is Lumenal. Residues 39–59 (LTLFICASAMVWISYIIAIIV) traverse the membrane as a helical segment. Topologically, residues 60–124 (PPGSPPKNYT…GHRNMPHFMR (65 aa)) are cytoplasmic. Residues 77–127 (MYCLKCKAYKPERTHHSKALGVCVLKMDHHCPWTNNTVGHRNMPHFMRFLV) form the DHHC domain. Cys107 serves as the catalytic S-palmitoyl cysteine intermediate. The chain crosses the membrane as a helical span at residues 125–145 (FLVWVDMTVGYLFIRLCIRIM). The Lumenal segment spans residues 146–162 (KLWRDKHLPSYLFDKTE). A helical membrane pass occupies residues 163 to 183 (VILSIVFLPASFFVLFTVGIL). The Cytoplasmic portion of the chain corresponds to 184–342 (TIRVFVNMCN…ADFGVEHTDI (159 aa)).

It belongs to the DHHC palmitoyltransferase family. PFA4 subfamily.

It localises to the endoplasmic reticulum membrane. It carries out the reaction L-cysteinyl-[protein] + hexadecanoyl-CoA = S-hexadecanoyl-L-cysteinyl-[protein] + CoA. In terms of biological role, mediates the reversible addition of palmitate to target proteins, thereby regulating their membrane association and biological function. This is Palmitoyltransferase PFA4 from Yarrowia lipolytica (strain CLIB 122 / E 150) (Yeast).